The primary structure comprises 238 residues: Cysteine-rich venom protein pseudechetoxin-like (238 aa).

Positions 1–19 (MIAFIVLLSLAAVLQQSSG) are cleaved as a signal peptide. A propeptide spanning residues 20–28 (TVDFASESS) is cleaved from the precursor. Positions 38-164 (VDKHNALRRS…STKYLYVCQY (127 aa)) constitute an SCP domain. 8 disulfide bridges follow: Cys-75/Cys-153, Cys-92/Cys-165, Cys-148/Cys-162, Cys-184/Cys-191, Cys-187/Cys-196, Cys-200/Cys-233, Cys-209/Cys-227, and Cys-218/Cys-231. The ShKT domain maps to 200–233 (CKHEDDFSNCKALAKNSKCQTAWIKSKCPATCFC).

This sequence belongs to the CRISP family. Expressed by the venom gland.

Its subcellular location is the secreted. Functionally, blocks olfactory (CNGA2) and retinal (CNGA1) CNG channel currents. Does not affect neither depolarization- nor caffeine-induced contraction of smooth muscle. The protein is Cysteine-rich venom protein pseudechetoxin-like of Hoplocephalus stephensii (Stephens's banded snake).